The sequence spans 383 residues: Probable 2-succinylbenzoate--CoA ligase (383 aa).

This sequence belongs to the ATP-dependent AMP-binding enzyme family. MenE subfamily.

It catalyses the reaction 2-succinylbenzoate + ATP + CoA = 2-succinylbenzoyl-CoA + AMP + diphosphate. The protein operates within quinol/quinone metabolism; 1,4-dihydroxy-2-naphthoate biosynthesis; 1,4-dihydroxy-2-naphthoate from chorismate: step 5/7. It participates in quinol/quinone metabolism; menaquinone biosynthesis. Its function is as follows. Converts 2-succinylbenzoate (OSB) to 2-succinylbenzoyl-CoA (OSB-CoA). May be involved in the biosynthesis of menaquinone. The protein is Probable 2-succinylbenzoate--CoA ligase (menE) of Mycobacterium tuberculosis (strain CDC 1551 / Oshkosh).